Reading from the N-terminus, the 356-residue chain is Ribosomal RNA large subunit methyltransferase M (356 aa).

Residues Ser187, 220 to 223 (CPGG), Asp239, Asp259, and Asp276 contribute to the S-adenosyl-L-methionine site. Lys305 functions as the Proton acceptor in the catalytic mechanism.

The protein belongs to the class I-like SAM-binding methyltransferase superfamily. RNA methyltransferase RlmE family. RlmM subfamily. Monomer.

Its subcellular location is the cytoplasm. It catalyses the reaction cytidine(2498) in 23S rRNA + S-adenosyl-L-methionine = 2'-O-methylcytidine(2498) in 23S rRNA + S-adenosyl-L-homocysteine + H(+). In terms of biological role, catalyzes the 2'-O-methylation at nucleotide C2498 in 23S rRNA. The sequence is that of Ribosomal RNA large subunit methyltransferase M from Pseudoalteromonas atlantica (strain T6c / ATCC BAA-1087).